Reading from the N-terminus, the 674-residue chain is Inactivation-no-after-potential D protein (674 aa).

Residues 17-106 form the PDZ 1 domain; that stretch reads MVTLDKTGKK…KIELEIQTFD (90 aa). The segment at 133-192 is disordered; that stretch reads QTTNNNASGGQGMGQGQGQGQGMAGMNRQQSMQKRNTTFTASMRQKHSNYADEDDEDTRD. Gly residues predominate over residues 141-155; it reads GGQGMGQGQGQGQGM. Residues 159-175 are compositionally biased toward polar residues; the sequence is NRQQSMQKRNTTFTASM. PDZ domains are found at residues 249–332 and 364–448; these read RIEV…TSRR and ARTV…LTLK. Positions 458-475 are enriched in basic and acidic residues; it reads AAEEKKKEEAKKEEEKPQ. Residues 458–481 form a disordered region; the sequence is AAEEKKKEEAKKEEEKPQEPATAE. PDZ domains are found at residues 489-577 and 584-664; these read LIEL…RADP and NVDL…TRPK. Phosphoserine is present on residues S598 and S600.

Interacts with the C-terminus of trp, and with norpA and inaC to form the inaD signaling complex. Interacts with Fkbp59, which together with trpl, rhodopsin and calmodulin may also be part of the inaD complex. Phosphorylated by inaC. As to expression, expressed in photoreceptor cells (R cells) of the compound eyes and ocelli.

The protein resides in the cell projection. It localises to the rhabdomere. Its function is as follows. Involved in the negative feedback regulation of the light-activated signaling cascade in photoreceptors through a calcium-mediated process. Interacts with tetrapeptide ligand located in C-terminal sequence of 3 key components of the visual cascade, tethering them and forming a macromolecular signaling phototransduction complex. The protein is Inactivation-no-after-potential D protein (inaD) of Drosophila melanogaster (Fruit fly).